A 263-amino-acid chain; its full sequence is Triosephosphate isomerase (263 aa).

10 to 12 serves as a coordination point for substrate; it reads NWK. The active-site Electrophile is the His-104. Glu-176 acts as the Proton acceptor in catalysis. Substrate contacts are provided by residues Gly-182, Ser-221, and 242-243; that span reads GG.

This sequence belongs to the triosephosphate isomerase family. In terms of assembly, homodimer.

The protein resides in the cytoplasm. It carries out the reaction D-glyceraldehyde 3-phosphate = dihydroxyacetone phosphate. Its pathway is carbohydrate biosynthesis; gluconeogenesis. It participates in carbohydrate degradation; glycolysis; D-glyceraldehyde 3-phosphate from glycerone phosphate: step 1/1. Functionally, involved in the gluconeogenesis. Catalyzes stereospecifically the conversion of dihydroxyacetone phosphate (DHAP) to D-glyceraldehyde-3-phosphate (G3P). The polypeptide is Triosephosphate isomerase (Haemophilus influenzae (strain ATCC 51907 / DSM 11121 / KW20 / Rd)).